A 377-amino-acid polypeptide reads, in one-letter code: Ribosomal RNA large subunit methyltransferase G (377 aa).

It belongs to the methyltransferase superfamily. RlmG family.

It localises to the cytoplasm. It carries out the reaction guanosine(1835) in 23S rRNA + S-adenosyl-L-methionine = N(2)-methylguanosine(1835) in 23S rRNA + S-adenosyl-L-homocysteine + H(+). Functionally, specifically methylates the guanine in position 1835 (m2G1835) of 23S rRNA. This Shewanella oneidensis (strain ATCC 700550 / JCM 31522 / CIP 106686 / LMG 19005 / NCIMB 14063 / MR-1) protein is Ribosomal RNA large subunit methyltransferase G.